The sequence spans 279 residues: Phosphate import ATP-binding protein PstB 1 (279 aa).

Residues 26-274 form the ABC transporter domain; the sequence is VMDCKLDKIF…PREQLTSDYI (249 aa). 59 to 66 serves as a coordination point for ATP; that stretch reads GPSGCGKS.

It belongs to the ABC transporter superfamily. Phosphate importer (TC 3.A.1.7) family. As to quaternary structure, the complex is composed of two ATP-binding proteins (PstB), two transmembrane proteins (PstC and PstA) and a solute-binding protein (PstS).

It is found in the cell inner membrane. The catalysed reaction is phosphate(out) + ATP + H2O = ADP + 2 phosphate(in) + H(+). Part of the ABC transporter complex PstSACB involved in phosphate import. Responsible for energy coupling to the transport system. This Pseudomonas putida (strain ATCC 47054 / DSM 6125 / CFBP 8728 / NCIMB 11950 / KT2440) protein is Phosphate import ATP-binding protein PstB 1.